Consider the following 366-residue polypeptide: UDP-GlcNAc:ribostamycin N-acetylglucosaminyltransferase (366 aa).

A compositionally biased stretch (low complexity) spans 342–352 (AAGAGPAVPAG). Residues 342 to 366 (AAGAGPAVPAGAGEGRGGREEEHGG) form a disordered region. Residues 357-366 (RGGREEEHGG) are compositionally biased toward basic and acidic residues.

It belongs to the glycosyltransferase group 1 family. Glycosyltransferase 4 subfamily. Requires a divalent metal cation as cofactor.

It carries out the reaction ribostamycin + UDP-N-acetyl-alpha-D-glucosamine = 2'''-acetyl-6'''-hydroxyneomycin C + UDP + H(+). Its pathway is antibiotic biosynthesis; neomycin biosynthesis. In terms of biological role, glycosyltransferase involved in the biosynthesis of neomycin by mediating glycosylation of ribostamycin with UDP-GlcNAc as a sugar donor to generate 2'''-acetyl-6'''-hydroxyneomycin C. The polypeptide is UDP-GlcNAc:ribostamycin N-acetylglucosaminyltransferase (neoK) (Streptomyces fradiae (Streptomyces roseoflavus)).